The following is a 359-amino-acid chain: Aminomethyltransferase (359 aa).

It belongs to the GcvT family. In terms of assembly, the glycine cleavage system is composed of four proteins: P, T, L and H.

The catalysed reaction is N(6)-[(R)-S(8)-aminomethyldihydrolipoyl]-L-lysyl-[protein] + (6S)-5,6,7,8-tetrahydrofolate = N(6)-[(R)-dihydrolipoyl]-L-lysyl-[protein] + (6R)-5,10-methylene-5,6,7,8-tetrahydrofolate + NH4(+). Functionally, the glycine cleavage system catalyzes the degradation of glycine. The polypeptide is Aminomethyltransferase (Pseudoalteromonas atlantica (strain T6c / ATCC BAA-1087)).